A 490-amino-acid chain; its full sequence is GTPase Der (490 aa).

EngA-type G domains follow at residues 3–166 (PVVA…VDEI) and 203–376 (IKLA…DSST). GTP-binding positions include 9–16 (GRPNVGKS), 56–60 (DTGGI), 118–121 (NKTD), 209–216 (GRPNVGKS), 256–260 (DTAGV), and 321–324 (NKWD). The 85-residue stretch at 377–461 (RRQSTAMLTR…PIRIQFKEGE (85 aa)) folds into the KH-like domain.

Belongs to the TRAFAC class TrmE-Era-EngA-EngB-Septin-like GTPase superfamily. EngA (Der) GTPase family. As to quaternary structure, associates with the 50S ribosomal subunit.

Functionally, GTPase that plays an essential role in the late steps of ribosome biogenesis. In Enterobacter sp. (strain 638), this protein is GTPase Der.